We begin with the raw amino-acid sequence, 399 residues long: Arginase (399 aa).

Mn(2+)-binding residues include His193, Asp216, His218, and Asp220. Substrate is bound by residues 218-222 (HADIN), 229-231 (SGN), and Asp273. Mn(2+)-binding residues include Asp322 and Asp324. 2 residues coordinate substrate: Thr336 and Glu367.

Belongs to the arginase family. The cofactor is Mn(2+).

The protein resides in the cytoplasm. It carries out the reaction L-arginine + H2O = urea + L-ornithine. The protein operates within nitrogen metabolism; urea cycle; L-ornithine and urea from L-arginine: step 1/1. In Eremothecium gossypii (strain ATCC 10895 / CBS 109.51 / FGSC 9923 / NRRL Y-1056) (Yeast), this protein is Arginase (CAR1).